Here is a 340-residue protein sequence, read N- to C-terminus: Delta-aminolevulinic acid dehydratase (340 aa).

Zn(2+) contacts are provided by C134, C136, and C144. Catalysis depends on K211, which acts as the Schiff-base intermediate with substrate. R221 and R233 together coordinate 5-aminolevulinate. Catalysis depends on K264, which acts as the Schiff-base intermediate with substrate. 5-aminolevulinate is bound by residues S291 and Y330.

This sequence belongs to the ALAD family. As to quaternary structure, homooctamer. Requires Zn(2+) as cofactor.

It carries out the reaction 2 5-aminolevulinate = porphobilinogen + 2 H2O + H(+). It participates in porphyrin-containing compound metabolism; protoporphyrin-IX biosynthesis; coproporphyrinogen-III from 5-aminolevulinate: step 1/4. In terms of biological role, catalyzes an early step in the biosynthesis of tetrapyrroles. Binds two molecules of 5-aminolevulinate per subunit, each at a distinct site, and catalyzes their condensation to form porphobilinogen. The chain is Delta-aminolevulinic acid dehydratase (HEM2) from Eremothecium gossypii (strain ATCC 10895 / CBS 109.51 / FGSC 9923 / NRRL Y-1056) (Yeast).